We begin with the raw amino-acid sequence, 463 residues long: Type IV secretion system protein PtlD homolog (463 aa).

The first 24 residues, 1–24 (MAGLSRILLSCTLACLLAGQAAQA), serve as a signal peptide directing secretion. Helical transmembrane passes span 118 to 138 (LQPL…YALL), 232 to 252 (WLLC…LAAS), 253 to 273 (LLIV…LFLV), 294 to 314 (ALVF…VLAG), and 333 to 353 (MLAA…VPLA). Low complexity predominate over residues 376–410 (AHRQAAARQYAPRPAAAAAAAGPHQAGTYAASATP). The interval 376–463 (AHRQAAARQY…RVLPRKPNLP (88 aa)) is disordered. The span at 411–420 (APAPARPAPS) shows a compositional bias: pro residues. Residues 441 to 455 (VRRDDRPAPAPDRRV) show a composition bias toward basic and acidic residues.

The protein resides in the cell membrane. This is Type IV secretion system protein PtlD homolog (ptlD) from Bordetella parapertussis (strain 12822 / ATCC BAA-587 / NCTC 13253).